The chain runs to 829 residues: Probable beta-glucosidase H (829 aa).

N13 carries N-linked (GlcNAc...) asparagine glycosylation. The active site involves D225. N304, N473, N602, N627, N664, and N749 each carry an N-linked (GlcNAc...) asparagine glycan. The PA14 domain occupies 389–548 (RMLSNAVIHF…DPEQMVANAV (160 aa)).

This sequence belongs to the glycosyl hydrolase 3 family.

It is found in the secreted. It carries out the reaction Hydrolysis of terminal, non-reducing beta-D-glucosyl residues with release of beta-D-glucose.. The protein operates within glycan metabolism; cellulose degradation. Functionally, beta-glucosidases are one of a number of cellulolytic enzymes involved in the degradation of cellulosic biomass. Catalyzes the last step releasing glucose from the inhibitory cellobiose. This Aspergillus fumigatus (strain CBS 144.89 / FGSC A1163 / CEA10) (Neosartorya fumigata) protein is Probable beta-glucosidase H (bglH).